The sequence spans 306 residues: Pantothenate kinase (306 aa).

91–98 contacts ATP; the sequence is GSVAVGKS.

Belongs to the prokaryotic pantothenate kinase family.

It localises to the cytoplasm. It carries out the reaction (R)-pantothenate + ATP = (R)-4'-phosphopantothenate + ADP + H(+). The protein operates within cofactor biosynthesis; coenzyme A biosynthesis; CoA from (R)-pantothenate: step 1/5. This Streptococcus equi subsp. zooepidemicus (strain H70) protein is Pantothenate kinase.